The chain runs to 272 residues: Shikimate dehydrogenase (NADP(+)) (272 aa).

Shikimate is bound by residues 14-16 (SKS) and Thr-61. The Proton acceptor role is filled by Lys-65. Glu-77 provides a ligand contact to NADP(+). 2 residues coordinate shikimate: Asn-86 and Asp-102. Residues 126-130 (GAGGA), 149-154 (NRTASR), and Met-213 each bind NADP(+). Tyr-215 contributes to the shikimate binding site. Residue Gly-237 participates in NADP(+) binding.

This sequence belongs to the shikimate dehydrogenase family. As to quaternary structure, homodimer.

The enzyme catalyses shikimate + NADP(+) = 3-dehydroshikimate + NADPH + H(+). It functions in the pathway metabolic intermediate biosynthesis; chorismate biosynthesis; chorismate from D-erythrose 4-phosphate and phosphoenolpyruvate: step 4/7. Its function is as follows. Involved in the biosynthesis of the chorismate, which leads to the biosynthesis of aromatic amino acids. Catalyzes the reversible NADPH linked reduction of 3-dehydroshikimate (DHSA) to yield shikimate (SA). This Salmonella enteritidis PT4 (strain P125109) protein is Shikimate dehydrogenase (NADP(+)).